The following is a 306-amino-acid chain: Recombination-associated protein RdgC (306 aa).

It belongs to the RdgC family.

The protein resides in the cytoplasm. The protein localises to the nucleoid. Functionally, may be involved in recombination. The sequence is that of Recombination-associated protein RdgC from Pseudomonas putida (strain GB-1).